Consider the following 133-residue polypeptide: Fluoride-specific ion channel FluC 3 (133 aa).

3 consecutive transmembrane segments (helical) span residues 7 to 27 (ILVLVGGFIGGVMRFFLSGYV), 37 to 57 (WGTFVVNVSGAFVIGTAAGLG), and 60 to 80 (LGAIFSTTIFHEFIMVGLLGG). Residues glycine 79 and threonine 82 each contribute to the Na(+) site. A helical membrane pass occupies residues 107 to 127 (IVASALLCVLAVAAGYGGIMW).

Belongs to the fluoride channel Fluc/FEX (TC 1.A.43) family.

Its subcellular location is the cell inner membrane. The enzyme catalyses fluoride(in) = fluoride(out). Its activity is regulated as follows. Na(+) is not transported, but it plays an essential structural role and its presence is essential for fluoride channel function. In terms of biological role, fluoride-specific ion channel. Important for reducing fluoride concentration in the cell, thus reducing its toxicity. The polypeptide is Fluoride-specific ion channel FluC 3 (Brucella suis biovar 1 (strain 1330)).